A 190-amino-acid polypeptide reads, in one-letter code: Xanthine phosphoribosyltransferase (190 aa).

Xanthine contacts are provided by Leu20 and Asn27. 128 to 132 is a binding site for 5-phospho-alpha-D-ribose 1-diphosphate; sequence ANGHA. Lys156 serves as a coordination point for xanthine.

The protein belongs to the purine/pyrimidine phosphoribosyltransferase family. Xpt subfamily. As to quaternary structure, homodimer.

The protein resides in the cytoplasm. The catalysed reaction is XMP + diphosphate = xanthine + 5-phospho-alpha-D-ribose 1-diphosphate. It participates in purine metabolism; XMP biosynthesis via salvage pathway; XMP from xanthine: step 1/1. Functionally, converts the preformed base xanthine, a product of nucleic acid breakdown, to xanthosine 5'-monophosphate (XMP), so it can be reused for RNA or DNA synthesis. In Pseudomonas paraeruginosa (strain DSM 24068 / PA7) (Pseudomonas aeruginosa (strain PA7)), this protein is Xanthine phosphoribosyltransferase.